The chain runs to 185 residues: Ribonuclease HII (185 aa).

In terms of domain architecture, RNase H type-2 spans 1–185 (MIILGIDEAG…KSYKPIQLLL (185 aa)). Positions 7, 8, and 99 each coordinate a divalent metal cation.

The protein belongs to the RNase HII family. Mn(2+) serves as cofactor. Mg(2+) is required as a cofactor.

Its subcellular location is the cytoplasm. The catalysed reaction is Endonucleolytic cleavage to 5'-phosphomonoester.. In terms of biological role, endonuclease that specifically degrades the RNA of RNA-DNA hybrids. This chain is Ribonuclease HII, found in Francisella philomiragia subsp. philomiragia (strain ATCC 25017 / CCUG 19701 / FSC 153 / O#319-036).